Consider the following 286-residue polypeptide: MANLKELRSRITSVSSTMQITKAMKMVSASKLSKAQDAITQMRPYSEKLTQLLQDLSATLDDDAGSKYAEEREVKNVLIVAISSNKGLAGAFNTNIIKAVKYKAKNDYKAKNIDIYTVGKKANDILKKEYDIHKNNNEIYDDLSFENASAIAEELMQLFLDEKYDKIVLVYNQFKNAATQIVQHEQFLPIEQFDSEENKQLDYIFEPSKLEIVKDLIPKSLKMQLFKALRDSFASEHGARMTAMHKATENATELRDDLKLSYNKARQASITNEILEIVGGAEALNG.

It belongs to the ATPase gamma chain family. In terms of assembly, F-type ATPases have 2 components, CF(1) - the catalytic core - and CF(0) - the membrane proton channel. CF(1) has five subunits: alpha(3), beta(3), gamma(1), delta(1), epsilon(1). CF(0) has three main subunits: a, b and c.

The protein resides in the cell inner membrane. Produces ATP from ADP in the presence of a proton gradient across the membrane. The gamma chain is believed to be important in regulating ATPase activity and the flow of protons through the CF(0) complex. The chain is ATP synthase gamma chain from Christiangramia forsetii (strain DSM 17595 / CGMCC 1.15422 / KT0803) (Gramella forsetii).